Here is a 61-residue protein sequence, read N- to C-terminus: Small ribosomal subunit protein uS14B (61 aa).

Residues Cys-24, Cys-27, Cys-40, and Cys-43 each coordinate Zn(2+).

The protein belongs to the universal ribosomal protein uS14 family. Zinc-binding uS14 subfamily. Part of the 30S ribosomal subunit. Contacts proteins S3 and S10. Requires Zn(2+) as cofactor.

Functionally, binds 16S rRNA, required for the assembly of 30S particles and may also be responsible for determining the conformation of the 16S rRNA at the A site. This is Small ribosomal subunit protein uS14B from Levilactobacillus brevis (strain ATCC 367 / BCRC 12310 / CIP 105137 / JCM 1170 / LMG 11437 / NCIMB 947 / NCTC 947) (Lactobacillus brevis).